The following is a 213-amino-acid chain: Large ribosomal subunit protein uL1 (213 aa).

This sequence belongs to the universal ribosomal protein uL1 family. As to quaternary structure, part of the 50S ribosomal subunit.

In terms of biological role, binds directly to 23S rRNA. Probably involved in E site tRNA release. Protein L1 is also a translational repressor protein, it controls the translation of its operon by binding to its mRNA. The polypeptide is Large ribosomal subunit protein uL1 (Methanocorpusculum labreanum (strain ATCC 43576 / DSM 4855 / Z)).